A 240-amino-acid polypeptide reads, in one-letter code: Uridylate kinase (240 aa).

ATP is bound at residue 13-16; the sequence is KLSG. The interval 21–26 is involved in allosteric activation by GTP; sequence GEQGYG. Gly55 lines the UMP pocket. Positions 56 and 60 each coordinate ATP. Residues Asp75 and 137–144 contribute to the UMP site; that span reads TGNPFFST. ATP is bound by residues Thr164, Tyr170, and Asp173.

This sequence belongs to the UMP kinase family. In terms of assembly, homohexamer.

It localises to the cytoplasm. The catalysed reaction is UMP + ATP = UDP + ADP. It participates in pyrimidine metabolism; CTP biosynthesis via de novo pathway; UDP from UMP (UMPK route): step 1/1. Allosterically activated by GTP. Inhibited by UTP. Its function is as follows. Catalyzes the reversible phosphorylation of UMP to UDP. This Aquifex aeolicus (strain VF5) protein is Uridylate kinase.